Here is a 268-residue protein sequence, read N- to C-terminus: Tetratricopeptide repeat protein 33 (268 aa).

Residues 14 to 34 form a disordered region; it reads VSKQTVQQFEQDSEQADEDEV. The segment covering 24-34 has biased composition (acidic residues); sequence QDSEQADEDEV. 3 TPR repeats span residues 60 to 93, 94 to 127, and 128 to 161; these read SKRLKEEGALLAEQDRNWEALKKWDEAVQLTPED, AVLYEMKSQVLITLGEVFLAVQSAEMATRLRPIW, and WEAWQTLGRAQLSLGEVELAVRSFQVALHLHPSE. A disordered region spans residues 249–268; that stretch reads EGDDNPTSSSQSVLIKARGL.

In Danio rerio (Zebrafish), this protein is Tetratricopeptide repeat protein 33 (ttc33).